A 479-amino-acid polypeptide reads, in one-letter code: Bifunctional AAC/APH (479 aa).

Residues 8–180 (ICIRTLIDDD…DCYLMEYRYD (173 aa)) form the N-acetyltransferase domain. The acetyl-CoA binding site stretch occupies residues 110–153 (KGIGTRYIKLIFEFLKKERNANAVILDPHKNNPRAIRAYQKSGF). D374 serves as the catalytic Proton acceptor; for phosphotransferase activity. D393 contributes to the a gentamycin binding site.

This sequence in the C-terminal section; belongs to the aminoglycoside phosphotransferase family.

Its subcellular location is the cytoplasm. The catalysed reaction is a gentamycin + GTP = a gentamycin 2''-phosphate + GDP + H(+). Its function is as follows. Involved in resistance to gentamicin, tobramycin, and kanamycin. Tobramycin and kanamycin resistance is due to the ACC activity, specified by N-terminal region. The C-terminal region is a kinase that phosphorylates several 4,6-disubstituted aminoglycosides. This chain is Bifunctional AAC/APH (aacA-aphD), found in Enterococcus faecalis (strain ATCC 700802 / V583).